The chain runs to 86 residues: Protein Tat (86 aa).

The tract at residues 1-24 (MEPVDPRLEPWKHPGSQPKTACTN) is interaction with human CREBBP. The segment at 1-48 (MEPVDPRLEPWKHPGSQPKTACTNCYCKKCCFHCQVCFITKALGISYG) is transactivation. The Zn(2+) site is built by cysteine 22, cysteine 25, and cysteine 27. The tract at residues 22 to 37 (CTNCYCKKCCFHCQVC) is cysteine-rich. The residue at position 28 (lysine 28) is an N6-acetyllysine; by host PCAF. Zn(2+) is bound by residues cysteine 30, histidine 33, cysteine 34, and cysteine 37. The tract at residues 38–48 (FITKALGISYG) is core. Over residues 48 to 58 (GRKKRRQRRRA) the composition is skewed to basic residues. A disordered region spans residues 48-86 (GRKKRRQRRRAPQGSQTHQVSLSKQPTSQSRGDPTGPKE). A Nuclear localization signal, RNA-binding (TAR), and protein transduction motif is present at residues 49 to 57 (RKKRRQRRR). The tract at residues 49–86 (RKKRRQRRRAPQGSQTHQVSLSKQPTSQSRGDPTGPKE) is interaction with the host capping enzyme RNGTT. N6-acetyllysine; by host EP300 and GCN5L2 occurs at positions 50 and 51. Residues arginine 52 and arginine 53 each carry the asymmetric dimethylarginine; by host PRMT6 modification. The span at 60–79 (QGSQTHQVSLSKQPTSQSRG) shows a compositional bias: polar residues. Residue lysine 71 forms a Glycyl lysine isopeptide (Lys-Gly) (interchain with G-Cter in ubiquitin) linkage. The short motif at 78-80 (RGD) is the Cell attachment site element.

The protein belongs to the lentiviruses Tat family. As to quaternary structure, interacts with host CCNT1. Associates with the P-TEFb complex composed at least of Tat, P-TEFb (CDK9 and CCNT1), TAR RNA, RNA Pol II. Recruits the HATs CREBBP, TAF1/TFIID, EP300, PCAF and GCN5L2. Interacts with host KAT5/Tip60; this interaction targets the latter to degradation. Interacts with the host deacetylase SIRT1. Interacts with host capping enzyme RNGTT; this interaction stimulates RNGTT. Binds to host KDR, and to the host integrins ITGAV/ITGB3 and ITGA5/ITGB1. Interacts with host KPNB1/importin beta-1 without previous binding to KPNA1/importin alpha-1. Interacts with EIF2AK2. Interacts with host nucleosome assembly protein NAP1L1; this interaction may be required for the transport of Tat within the nucleus, since the two proteins interact at the nuclear rim. Interacts with host C1QBP/SF2P32; this interaction involves lysine-acetylated Tat. Interacts with the host chemokine receptors CCR2, CCR3 and CXCR4. Interacts with host DPP4/CD26; this interaction may trigger an anti-proliferative effect. Interacts with host LDLR. Interacts with the host extracellular matrix metalloproteinase MMP1. Interacts with host PRMT6; this interaction mediates Tat's methylation. Interacts with, and is ubiquitinated by MDM2/Hdm2. Interacts with host PSMC3 and HTATIP2. Interacts with STAB1; this interaction may overcome SATB1-mediated repression of IL2 and IL2RA (interleukin) in T cells by binding to the same domain than HDAC1. Interacts (when acetylated) with human CDK13, thereby increasing HIV-1 mRNA splicing and promoting the production of the doubly spliced HIV-1 protein Nef. Interacts with host TBP; this interaction modulates the activity of transcriptional pre-initiation complex. Interacts with host RELA. Interacts with host PLSCR1; this interaction negatively regulates Tat transactivation activity by altering its subcellular distribution. Post-translationally, asymmetrical arginine methylation by host PRMT6 seems to diminish the transactivation capacity of Tat and affects the interaction with host CCNT1. Acetylation by EP300, CREBBP, GCN5L2/GCN5 and PCAF regulates the transactivation activity of Tat. EP300-mediated acetylation of Lys-50 promotes dissociation of Tat from the TAR RNA through the competitive binding to PCAF's bromodomain. In addition, the non-acetylated Tat's N-terminus can also interact with PCAF. PCAF-mediated acetylation of Lys-28 enhances Tat's binding to CCNT1. Lys-50 is deacetylated by SIRT1. In terms of processing, polyubiquitination by host MDM2 does not target Tat to degradation, but activates its transactivation function and fosters interaction with CCNT1 and TAR RNA. Post-translationally, phosphorylated by EIF2AK2 on serine and threonine residues adjacent to the basic region important for TAR RNA binding and function. Phosphorylation of Tat by EIF2AK2 is dependent on the prior activation of EIF2AK2 by dsRNA.

It localises to the host nucleus. The protein resides in the host nucleolus. The protein localises to the host cytoplasm. Its subcellular location is the secreted. Functionally, transcriptional activator that increases RNA Pol II processivity, thereby increasing the level of full-length viral transcripts. Recognizes a hairpin structure at the 5'-LTR of the nascent viral mRNAs referred to as the transactivation responsive RNA element (TAR) and recruits the cyclin T1-CDK9 complex (P-TEFb complex) that will in turn hyperphosphorylate the RNA polymerase II to allow efficient elongation. The CDK9 component of P-TEFb and other Tat-activated kinases hyperphosphorylate the C-terminus of RNA Pol II that becomes stabilized and much more processive. Other factors such as HTATSF1/Tat-SF1, SUPT5H/SPT5, and HTATIP2 are also important for Tat's function. Besides its effect on RNA Pol II processivity, Tat induces chromatin remodeling of proviral genes by recruiting the histone acetyltransferases (HATs) CREBBP, EP300 and PCAF to the chromatin. This also contributes to the increase in proviral transcription rate, especially when the provirus integrates in transcriptionally silent region of the host genome. To ensure maximal activation of the LTR, Tat mediates nuclear translocation of NF-kappa-B by interacting with host RELA. Through its interaction with host TBP, Tat may also modulate transcription initiation. Tat can reactivate a latently infected cell by penetrating in it and transactivating its LTR promoter. In the cytoplasm, Tat is thought to act as a translational activator of HIV-1 mRNAs. In terms of biological role, extracellular circulating Tat can be endocytosed by surrounding uninfected cells via the binding to several surface receptors such as CD26, CXCR4, heparan sulfate proteoglycans (HSPG) or LDLR. Neurons are rarely infected, but they internalize Tat via their LDLR. Through its interaction with nuclear HATs, Tat is potentially able to control the acetylation-dependent cellular gene expression. Modulates the expression of many cellular genes involved in cell survival, proliferation or in coding for cytokines or cytokine receptors. Tat plays a role in T-cell and neurons apoptosis. Tat induced neurotoxicity and apoptosis probably contribute to neuroAIDS. Circulating Tat also acts as a chemokine-like and/or growth factor-like molecule that binds to specific receptors on the surface of the cells, affecting many cellular pathways. In the vascular system, Tat binds to ITGAV/ITGB3 and ITGA5/ITGB1 integrins dimers at the surface of endothelial cells and competes with bFGF for heparin-binding sites, leading to an excess of soluble bFGF. The chain is Protein Tat from Human immunodeficiency virus type 1 group M subtype B (isolate PCV12) (HIV-1).